The primary structure comprises 404 residues: Imidazolonepropionase (404 aa).

His-73 and His-75 together coordinate Fe(3+). Residues His-73 and His-75 each contribute to the Zn(2+) site. Residues Arg-82, Tyr-145, and His-178 each coordinate 4-imidazolone-5-propanoate. N-formimidoyl-L-glutamate is bound at residue Tyr-145. Position 243 (His-243) interacts with Fe(3+). His-243 is a Zn(2+) binding site. Residue Gln-246 coordinates 4-imidazolone-5-propanoate. A Fe(3+)-binding site is contributed by Asp-318. Zn(2+) is bound at residue Asp-318. N-formimidoyl-L-glutamate contacts are provided by Asn-320 and Gly-322. Ser-323 lines the 4-imidazolone-5-propanoate pocket.

The protein belongs to the metallo-dependent hydrolases superfamily. HutI family. Zn(2+) serves as cofactor. Requires Fe(3+) as cofactor.

It localises to the cytoplasm. The enzyme catalyses 4-imidazolone-5-propanoate + H2O = N-formimidoyl-L-glutamate. It functions in the pathway amino-acid degradation; L-histidine degradation into L-glutamate; N-formimidoyl-L-glutamate from L-histidine: step 3/3. In terms of biological role, catalyzes the hydrolytic cleavage of the carbon-nitrogen bond in imidazolone-5-propanoate to yield N-formimidoyl-L-glutamate. It is the third step in the universal histidine degradation pathway. The polypeptide is Imidazolonepropionase (Bradyrhizobium sp. (strain BTAi1 / ATCC BAA-1182)).